The following is a 159-amino-acid chain: NADH-quinone oxidoreductase subunit B (159 aa).

Positions 32, 33, 97, and 126 each coordinate [4Fe-4S] cluster.

This sequence belongs to the complex I 20 kDa subunit family. In terms of assembly, NDH-1 is composed of 14 different subunits. Subunits NuoB, C, D, E, F, and G constitute the peripheral sector of the complex. [4Fe-4S] cluster is required as a cofactor.

The protein localises to the cell inner membrane. It catalyses the reaction a quinone + NADH + 5 H(+)(in) = a quinol + NAD(+) + 4 H(+)(out). In terms of biological role, NDH-1 shuttles electrons from NADH, via FMN and iron-sulfur (Fe-S) centers, to quinones in the respiratory chain. The immediate electron acceptor for the enzyme in this species is believed to be ubiquinone. Couples the redox reaction to proton translocation (for every two electrons transferred, four hydrogen ions are translocated across the cytoplasmic membrane), and thus conserves the redox energy in a proton gradient. This chain is NADH-quinone oxidoreductase subunit B, found in Helicobacter pylori (strain J99 / ATCC 700824) (Campylobacter pylori J99).